A 345-amino-acid chain; its full sequence is D-fructose 1,6-bisphosphatase class 2/sedoheptulose 1,7-bisphosphatase (345 aa).

Aspartate 33, glutamate 57, aspartate 97, and glutamate 100 together coordinate Mn(2+). Substrate-binding positions include 100–102 (EGT), tyrosine 131, 176–178 (RDR), and 198–200 (DGD). A Mn(2+)-binding site is contributed by glutamate 225.

It belongs to the FBPase class 2 family. Homotetramer. Mn(2+) serves as cofactor.

The catalysed reaction is beta-D-fructose 1,6-bisphosphate + H2O = beta-D-fructose 6-phosphate + phosphate. The enzyme catalyses D-sedoheptulose 1,7-bisphosphate + H2O = D-sedoheptulose 7-phosphate + phosphate. It participates in carbohydrate biosynthesis; Calvin cycle. Catalyzes the hydrolysis of fructose 1,6-bisphosphate (Fru 1,6-P2) and sedoheptulose 1,7-bisphosphate (Sed 1,7-P2) to fructose 6-phosphate and sedoheptulose 7-phosphate, respectively. The protein is D-fructose 1,6-bisphosphatase class 2/sedoheptulose 1,7-bisphosphatase of Nostoc sp. (strain PCC 7120 / SAG 25.82 / UTEX 2576).